The chain runs to 179 residues: Ribosome-recycling factor (179 aa).

It belongs to the RRF family.

The protein localises to the cytoplasm. Functionally, responsible for the release of ribosomes from messenger RNA at the termination of protein biosynthesis. May increase the efficiency of translation by recycling ribosomes from one round of translation to another. In Chlamydia trachomatis serovar A (strain ATCC VR-571B / DSM 19440 / HAR-13), this protein is Ribosome-recycling factor.